Reading from the N-terminus, the 544-residue chain is Probable protein kinase UbiB (544 aa).

Residues 123–501 (DFDIEPLASA…KRQQATGKFL (379 aa)) form the Protein kinase domain. ATP is bound by residues 129-137 (LASASIAQV) and Lys152. Asp287 acts as the Proton acceptor in catalysis. Residues 500–520 (FLFGVGATLVVCSAILVSSPY) form a helical membrane-spanning segment.

Belongs to the ABC1 family. UbiB subfamily.

It localises to the cell inner membrane. It functions in the pathway cofactor biosynthesis; ubiquinone biosynthesis [regulation]. In terms of biological role, is probably a protein kinase regulator of UbiI activity which is involved in aerobic coenzyme Q (ubiquinone) biosynthesis. The chain is Probable protein kinase UbiB from Vibrio atlanticus (strain LGP32) (Vibrio splendidus (strain Mel32)).